The sequence spans 330 residues: tRNA U34 carboxymethyltransferase (330 aa).

Carboxy-S-adenosyl-L-methionine is bound by residues lysine 91, tryptophan 105, lysine 110, glycine 130, 152 to 154, 181 to 182, methionine 196, tyrosine 200, and arginine 315; these read DPS and IE.

The protein belongs to the class I-like SAM-binding methyltransferase superfamily. CmoB family. In terms of assembly, homotetramer.

It catalyses the reaction carboxy-S-adenosyl-L-methionine + 5-hydroxyuridine(34) in tRNA = 5-carboxymethoxyuridine(34) in tRNA + S-adenosyl-L-homocysteine + H(+). In terms of biological role, catalyzes carboxymethyl transfer from carboxy-S-adenosyl-L-methionine (Cx-SAM) to 5-hydroxyuridine (ho5U) to form 5-carboxymethoxyuridine (cmo5U) at position 34 in tRNAs. The protein is tRNA U34 carboxymethyltransferase of Shewanella sediminis (strain HAW-EB3).